The chain runs to 380 residues: Polygalacturonase 2 (380 aa).

The N-terminal stretch at 1–20 is a signal peptide; that stretch reads MIAGSKLLMLGLFGALAVHA. Residues 21–38 constitute a propeptide that is removed on maturation; sequence LPEPAKAQVTAAPKLEER. A disulfide bridge links C42 with C60. PbH1 repeat units follow at residues 173–204 and 205–226; these read ATDLTLSGITVDNRDGDTDEGGHNTDAFDVGS and STGITITGATVYNQDDCLAVNS. D219 acts as the Proton donor in catalysis. Residues C221 and C237 are joined by a disulfide bond. The active site involves H241. PbH1 repeat units lie at residues 256–277, 285–307, and 319–364; these read VANVIIENSQIQDSTNGVRIKT, VKNVTYKDITLSGITKYGIVIEQ, and TDGV…SVSG. The N-linked (GlcNAc...) asparagine glycan is linked to N287. 2 disulfide bridges follow: C347-C352 and C371-C380.

The protein belongs to the glycosyl hydrolase 28 family.

Its subcellular location is the secreted. It catalyses the reaction (1,4-alpha-D-galacturonosyl)n+m + H2O = (1,4-alpha-D-galacturonosyl)n + (1,4-alpha-D-galacturonosyl)m.. This chain is Polygalacturonase 2 (PG2), found in Penicillium olsonii.